A 528-amino-acid chain; its full sequence is MAIVDTAIDGINYFLSLSLTQQITILVVFPFIYNIAWQLLYSLRKDRVPMVFYWIPWFGSAASYGMQPYEFFEKCRLKYGDVFSFMLLGKVMTVYLGPKGHEFIYNAKLSDVSAEEAYTHLTTPVFGKGVIYDCPNSRLMEQKKFAKFALTTDSFKTYVPKIREEVLNYFVNDVSFKTKERDHGVASVMKTQPEITIFTASRCLFGDEMRKSFDRSFAQLYADLDKGFTPINFVFPNLPLPHYWRRDAAQRKISAHYMKEIKRRRESGDIDPKRDLIDSLLVNSTYKDGVKMTDQEIANLLIGVLMGGQHTSASTSAWFLLHLAEQPQLQDDLYEELTNLLKEKGGDLNDLTYEDLQKLPLVNNTIKETLRMHMPLHSIFRKVMNPLRVPNTKYVIPKGHYVLVSAGYAHTSDRWFEHPEHFNPRRWESDDTKASAVSFNSEDTVDYGFGKISKGVSSPYLPFGGGRHRCIGEQFAYVQLGTILTTYIYNFKWRLNGDKVPDVDYQSMVTLPLEPAEIVWEKRDTCMV.

Cys-470 serves as a coordination point for heme.

This sequence belongs to the cytochrome P450 family. It depends on heme as a cofactor.

It is found in the membrane. It carries out the reaction a 14alpha-methyl steroid + 3 reduced [NADPH--hemoprotein reductase] + 3 O2 = a Delta(14) steroid + formate + 3 oxidized [NADPH--hemoprotein reductase] + 4 H2O + 4 H(+). The catalysed reaction is a 14alpha-methyl steroid + reduced [NADPH--hemoprotein reductase] + O2 = a 14alpha-hydroxymethyl steroid + oxidized [NADPH--hemoprotein reductase] + H2O + H(+). The enzyme catalyses a 14alpha-hydroxymethyl steroid + reduced [NADPH--hemoprotein reductase] + O2 = a 14alpha-formyl steroid + oxidized [NADPH--hemoprotein reductase] + 2 H2O + H(+). It catalyses the reaction a 14alpha-formyl steroid + reduced [NADPH--hemoprotein reductase] + O2 = a Delta(14) steroid + formate + oxidized [NADPH--hemoprotein reductase] + H2O + 2 H(+). It carries out the reaction lanosterol + 3 reduced [NADPH--hemoprotein reductase] + 3 O2 = 4,4-dimethyl-5alpha-cholesta-8,14,24-trien-3beta-ol + formate + 3 oxidized [NADPH--hemoprotein reductase] + 4 H2O + 4 H(+). The catalysed reaction is lanosterol + reduced [NADPH--hemoprotein reductase] + O2 = 32-hydroxylanosterol + oxidized [NADPH--hemoprotein reductase] + H2O + H(+). The enzyme catalyses 32-hydroxylanosterol + reduced [NADPH--hemoprotein reductase] + O2 = 32-oxolanosterol + oxidized [NADPH--hemoprotein reductase] + 2 H2O + H(+). It catalyses the reaction 32-oxolanosterol + reduced [NADPH--hemoprotein reductase] + O2 = 4,4-dimethyl-5alpha-cholesta-8,14,24-trien-3beta-ol + formate + oxidized [NADPH--hemoprotein reductase] + H2O + 2 H(+). It carries out the reaction eburicol + 3 reduced [NADPH--hemoprotein reductase] + 3 O2 = 14-demethyleburicol + formate + 3 oxidized [NADPH--hemoprotein reductase] + 4 H2O + 4 H(+). The catalysed reaction is eburicol + reduced [NADPH--hemoprotein reductase] + O2 = 32-hydroxyeburicol + oxidized [NADPH--hemoprotein reductase] + H2O + H(+). The enzyme catalyses 32-hydroxyeburicol + reduced [NADPH--hemoprotein reductase] + O2 = 32-oxoeburicol + oxidized [NADPH--hemoprotein reductase] + 2 H2O + H(+). It catalyses the reaction 32-oxoeburicol + reduced [NADPH--hemoprotein reductase] + O2 = 14-demethyleburicol + formate + oxidized [NADPH--hemoprotein reductase] + H2O + 2 H(+). It functions in the pathway steroid biosynthesis; zymosterol biosynthesis; zymosterol from lanosterol: step 1/6. Functionally, sterol 14alpha-demethylase that plays a critical role in the third module of ergosterol biosynthesis pathway, being ergosterol the major sterol component in fungal membranes that participates in a variety of functions. The third module or late pathway involves the ergosterol synthesis itself through consecutive reactions that mainly occur in the endoplasmic reticulum (ER) membrane. In filamentous fungi, during the initial step of this module, lanosterol (lanosta-8,24-dien-3beta-ol) can be metabolized to eburicol. Sterol 14alpha-demethylase catalyzes the three-step oxidative removal of the 14alpha-methyl group (C-32) of both these sterols in the form of formate, and converts eburicol and lanosterol to 14-demethyleburicol (4,4,24-trimethylergosta-8,14,24(28)-trienol) and 4,4-dimethyl-5alpha-cholesta-8,14,24-trien-3beta-ol, respectively, which are further metabolized by other enzymes in the pathway to ergosterol. Can also use substrates not intrinsic to fungi, such as 24,25-dihydrolanosterol (DHL), producing 4,4-dimethyl-8,14-cholestadien-3-beta-ol, but at lower rates than the endogenous substrates. This Candida tropicalis (Yeast) protein is Lanosterol 14-alpha demethylase (ERG11).